We begin with the raw amino-acid sequence, 568 residues long: 2-succinyl-5-enolpyruvyl-6-hydroxy-3-cyclohexene-1-carboxylate synthase (568 aa).

This sequence belongs to the TPP enzyme family. MenD subfamily. As to quaternary structure, homodimer. Mg(2+) serves as cofactor. Mn(2+) is required as a cofactor. The cofactor is thiamine diphosphate.

It carries out the reaction isochorismate + 2-oxoglutarate + H(+) = 5-enolpyruvoyl-6-hydroxy-2-succinyl-cyclohex-3-ene-1-carboxylate + CO2. It functions in the pathway quinol/quinone metabolism; 1,4-dihydroxy-2-naphthoate biosynthesis; 1,4-dihydroxy-2-naphthoate from chorismate: step 2/7. The protein operates within quinol/quinone metabolism; menaquinone biosynthesis. In terms of biological role, catalyzes the thiamine diphosphate-dependent decarboxylation of 2-oxoglutarate and the subsequent addition of the resulting succinic semialdehyde-thiamine pyrophosphate anion to isochorismate to yield 2-succinyl-5-enolpyruvyl-6-hydroxy-3-cyclohexene-1-carboxylate (SEPHCHC). The protein is 2-succinyl-5-enolpyruvyl-6-hydroxy-3-cyclohexene-1-carboxylate synthase of Haemophilus influenzae (strain PittGG).